The chain runs to 320 residues: tRNA uridine(34) hydroxylase (320 aa).

One can recognise a Rhodanese domain in the interval 123–217 (EDENTVILDA…YGKDPETKGL (95 aa)). C177 acts as the Cysteine persulfide intermediate in catalysis.

This sequence belongs to the TrhO family.

It carries out the reaction uridine(34) in tRNA + AH2 + O2 = 5-hydroxyuridine(34) in tRNA + A + H2O. In terms of biological role, catalyzes oxygen-dependent 5-hydroxyuridine (ho5U) modification at position 34 in tRNAs. This is tRNA uridine(34) hydroxylase from Staphylococcus epidermidis (strain ATCC 35984 / DSM 28319 / BCRC 17069 / CCUG 31568 / BM 3577 / RP62A).